Consider the following 354-residue polypeptide: Methylthioribose-1-phosphate isomerase (354 aa).

Residues 58-60 (RGA), R101, and Q204 each bind substrate. The active-site Proton donor is the D245. 255-256 (NK) contributes to the substrate binding site.

It belongs to the eIF-2B alpha/beta/delta subunits family. MtnA subfamily.

The enzyme catalyses 5-(methylsulfanyl)-alpha-D-ribose 1-phosphate = 5-(methylsulfanyl)-D-ribulose 1-phosphate. The protein operates within amino-acid biosynthesis; L-methionine biosynthesis via salvage pathway; L-methionine from S-methyl-5-thio-alpha-D-ribose 1-phosphate: step 1/6. Functionally, catalyzes the interconversion of methylthioribose-1-phosphate (MTR-1-P) into methylthioribulose-1-phosphate (MTRu-1-P). This Stenotrophomonas maltophilia (strain R551-3) protein is Methylthioribose-1-phosphate isomerase.